Here is a 1472-residue protein sequence, read N- to C-terminus: Type IV pilus biogenesis factor PilY1 homolog PD_1611 (1472 aa).

The Ca(2+) site is built by D1170, D1172, D1174, L1176, and D1178. The span at 1383-1397 (RGSRSSIGNSDTGAV) shows a compositional bias: polar residues. Residues 1383–1403 (RGSRSSIGNSDTGAVSTGGDA) form a disordered region.

Belongs to the PilY1 family.

It localises to the fimbrium. Functionally, one of the three PilY1 homologs of X.fastidiosa, which are involved in bacterial twitching motility as component of the filamentous type IV pili (T4P). The twitching motility of this protein is enhanced by calcium, which may provide the bacterium an adaptive advantage in environments with high calcium concentrations. The sequence is that of Type IV pilus biogenesis factor PilY1 homolog PD_1611 from Xylella fastidiosa (strain Temecula1 / ATCC 700964).